We begin with the raw amino-acid sequence, 218 residues long: uncharacterized protein (218 aa).

5 helical membrane-spanning segments follow: residues 19–39 (VFGFSEFSIIGFITAVIFTII), 92–112 (FDYALFLTLVGIANIGIVSAV), 124–144 (YGLIAMIATLPLFGSAGMILA), 161–181 (LLFEKIIFAAGMAGETGIAPF), and 196–216 (YILMIHLSSLLLIVRTVEILL).

It localises to the cell membrane. This is an uncharacterized protein from Methanocaldococcus jannaschii (strain ATCC 43067 / DSM 2661 / JAL-1 / JCM 10045 / NBRC 100440) (Methanococcus jannaschii).